We begin with the raw amino-acid sequence, 736 residues long: Catalase-peroxidase (736 aa).

Residues 1–21 (MFKKTILSFVISAVMVTAASA) form the signal peptide. A cross-link (tryptophyl-tyrosyl-methioninium (Trp-Tyr) (with M-250)) is located at residues 102–224 (WHAAGTYRTH…LAAVEMGLIY (123 aa)). Catalysis depends on His-103, which acts as the Proton acceptor. Positions 224 to 250 (YVNPVGPHGNPDPLLAANDIRMSFGRM) form a cross-link, tryptophyl-tyrosyl-methioninium (Tyr-Met) (with W-102). His-265 is a binding site for heme b.

The protein belongs to the peroxidase family. Peroxidase/catalase subfamily. As to quaternary structure, homodimer or homotetramer. The cofactor is heme b. Post-translationally, formation of the three residue Trp-Tyr-Met cross-link is important for the catalase, but not the peroxidase activity of the enzyme.

The catalysed reaction is H2O2 + AH2 = A + 2 H2O. It carries out the reaction 2 H2O2 = O2 + 2 H2O. Bifunctional enzyme with both catalase and broad-spectrum peroxidase activity. The chain is Catalase-peroxidase from Shewanella woodyi (strain ATCC 51908 / MS32).